A 277-amino-acid polypeptide reads, in one-letter code: Large ribosomal subunit protein uL2 (277 aa).

Positions 216-277 (RRPHNRGVAM…IIRRRKVGKG (62 aa)) are disordered.

This sequence belongs to the universal ribosomal protein uL2 family. In terms of assembly, part of the 50S ribosomal subunit. Forms a bridge to the 30S subunit in the 70S ribosome.

Functionally, one of the primary rRNA binding proteins. Required for association of the 30S and 50S subunits to form the 70S ribosome, for tRNA binding and peptide bond formation. It has been suggested to have peptidyltransferase activity; this is somewhat controversial. Makes several contacts with the 16S rRNA in the 70S ribosome. The chain is Large ribosomal subunit protein uL2 from Acidiphilium cryptum (strain JF-5).